The primary structure comprises 349 residues: Protein RecA (349 aa).

Residue 69-76 (GPESSGKT) coordinates ATP.

Belongs to the RecA family.

It localises to the cytoplasm. In terms of biological role, can catalyze the hydrolysis of ATP in the presence of single-stranded DNA, the ATP-dependent uptake of single-stranded DNA by duplex DNA, and the ATP-dependent hybridization of homologous single-stranded DNAs. It interacts with LexA causing its activation and leading to its autocatalytic cleavage. In Rippkaea orientalis (strain PCC 8801 / RF-1) (Cyanothece sp. (strain PCC 8801)), this protein is Protein RecA.